Here is a 393-residue protein sequence, read N- to C-terminus: Lipoyl synthase, mitochondrial (393 aa).

Residues C111, C116, C122, C142, C146, C149, and S357 each contribute to the [4Fe-4S] cluster site. In terms of domain architecture, Radical SAM core spans 127-346 (EHGTQTATIM…ETRGNELGFL (220 aa)).

It belongs to the radical SAM superfamily. Lipoyl synthase family. Requires [4Fe-4S] cluster as cofactor.

The protein resides in the mitochondrion. It catalyses the reaction [[Fe-S] cluster scaffold protein carrying a second [4Fe-4S](2+) cluster] + N(6)-octanoyl-L-lysyl-[protein] + 2 oxidized [2Fe-2S]-[ferredoxin] + 2 S-adenosyl-L-methionine + 4 H(+) = [[Fe-S] cluster scaffold protein] + N(6)-[(R)-dihydrolipoyl]-L-lysyl-[protein] + 4 Fe(3+) + 2 hydrogen sulfide + 2 5'-deoxyadenosine + 2 L-methionine + 2 reduced [2Fe-2S]-[ferredoxin]. Its pathway is protein modification; protein lipoylation via endogenous pathway; protein N(6)-(lipoyl)lysine from octanoyl-[acyl-carrier-protein]: step 2/2. Functionally, catalyzes the radical-mediated insertion of two sulfur atoms into the C-6 and C-8 positions of the octanoyl moiety bound to the lipoyl domains of lipoate-dependent enzymes, thereby converting the octanoylated domains into lipoylated derivatives. This Aedes aegypti (Yellowfever mosquito) protein is Lipoyl synthase, mitochondrial.